A 704-amino-acid chain; its full sequence is Low calcium response locus protein D (704 aa).

The next 7 membrane-spanning stretches (helical) occupy residues 18–35, 42–61, 108–132, 200–220, 235–259, 278–297, and 304–320; these read IMLA…VLPL, ILIA…AIYI, FVVG…FLVI, AIAG…IGVT, ILTV…GIIV, VVAQ…LFGL, and VTFL…GYML.

Belongs to the FHIPEP (flagella/HR/invasion proteins export pore) family.

The protein localises to the cell inner membrane. Functionally, could be involved in the secretion of the yop virulence proteins. This Yersinia pestis protein is Low calcium response locus protein D (lcrD).